Reading from the N-terminus, the 309-residue chain is tRNA dimethylallyltransferase (309 aa).

Residue 10 to 17 coordinates ATP; it reads GPTAVGKT. Residue 12-17 coordinates substrate; that stretch reads TAVGKT. Residues 35–38 are interaction with substrate tRNA; sequence DSMQ.

This sequence belongs to the IPP transferase family. In terms of assembly, monomer. Mg(2+) serves as cofactor.

The enzyme catalyses adenosine(37) in tRNA + dimethylallyl diphosphate = N(6)-dimethylallyladenosine(37) in tRNA + diphosphate. Catalyzes the transfer of a dimethylallyl group onto the adenine at position 37 in tRNAs that read codons beginning with uridine, leading to the formation of N6-(dimethylallyl)adenosine (i(6)A). This is tRNA dimethylallyltransferase from Clostridium botulinum (strain Eklund 17B / Type B).